We begin with the raw amino-acid sequence, 225 residues long: Late embryogenesis abundant protein 29 (225 aa).

2 disordered regions span residues 1 to 167 (MASN…GGFL) and 193 to 225 (TEEE…YQRK). Basic and acidic residues-rich tracts occupy residues 28-39 (MRDKAEEGRDKT), 49-61 (KAHE…KDKT), 71-83 (KAHE…KEKT), and 93-119 (KAHE…KDKA). 3 LEA 11-mer repeat repeats span residues 53-63 (TAQSAKDKTSQ), 75-85 (TAQSAKEKTSQ), and 97-107 (TTQAAKEKTSQ). The span at 141–153 (TKETAQGAAQYTK) shows a compositional bias: polar residues. Basic and acidic residues predominate over residues 154 to 163 (ETAEAGRDKT). Residues 205–225 (TTTTTATTRTTDPTHQTYQRK) are compositionally biased toward low complexity.

Belongs to the LEA type 4 family.

It localises to the cytoplasm. The protein localises to the cytosol. Its function is as follows. Involved dehydration tolerance. The polypeptide is Late embryogenesis abundant protein 29 (Arabidopsis thaliana (Mouse-ear cress)).